A 339-amino-acid polypeptide reads, in one-letter code: Small ribosomal subunit protein mS27 (339 aa).

Residues 1–37 (MGTITVVINEGPILLIRALHRATTNKKMFRSTVWRRF) constitute a mitochondrion transit peptide.

This sequence belongs to the mitochondrion-specific ribosomal protein mS27 family. Component of the mitochondrial small ribosomal subunit (mt-SSU). Mature yeast 74S mitochondrial ribosomes consist of a small (37S) and a large (54S) subunit. The 37S small subunit contains a 15S ribosomal RNA (15S mt-rRNA) and 34 different proteins. The 54S large subunit contains a 21S rRNA (21S mt-rRNA) and 46 different proteins.

It localises to the mitochondrion. Its function is as follows. Component of the mitochondrial ribosome (mitoribosome), a dedicated translation machinery responsible for the synthesis of mitochondrial genome-encoded proteins, including at least some of the essential transmembrane subunits of the mitochondrial respiratory chain. The mitoribosomes are attached to the mitochondrial inner membrane and translation products are cotranslationally integrated into the membrane. The chain is Small ribosomal subunit protein mS27 (MRP13) from Saccharomyces cerevisiae (strain ATCC 204508 / S288c) (Baker's yeast).